Here is a 189-residue protein sequence, read N- to C-terminus: Probable thymidylate kinase 1 (189 aa).

9 to 16 provides a ligand contact to ATP; that stretch reads GIDGSGKT.

The protein belongs to the thymidylate kinase family.

The catalysed reaction is dTMP + ATP = dTDP + ADP. The chain is Probable thymidylate kinase 1 (tmk1) from Saccharolobus solfataricus (strain ATCC 35092 / DSM 1617 / JCM 11322 / P2) (Sulfolobus solfataricus).